The sequence spans 508 residues: GMP synthase [glutamine-hydrolyzing] (508 aa).

A Glutamine amidotransferase type-1 domain is found at 1–189 (MILVLDFGSQ…ALLVCGCEKT (189 aa)). The Nucleophile role is filled by C78. Active-site residues include H163 and E165. Positions 190–383 (WGMQHFAQKE…LGISQDFLMR (194 aa)) constitute a GMPS ATP-PPase domain. 217–223 (SGGVDST) serves as a coordination point for ATP.

In terms of assembly, homodimer.

It catalyses the reaction XMP + L-glutamine + ATP + H2O = GMP + L-glutamate + AMP + diphosphate + 2 H(+). It functions in the pathway purine metabolism; GMP biosynthesis; GMP from XMP (L-Gln route): step 1/1. Catalyzes the synthesis of GMP from XMP. The polypeptide is GMP synthase [glutamine-hydrolyzing] (Helicobacter pylori (strain Shi470)).